The primary structure comprises 69 residues: MLCVSGFTSNLYSSKKDDKMKEISRTSNWGSSFSEKSGCMQTHPSMNLDCRDVTYVMNLLLIAHHHLLQ.

This is an uncharacterized protein from Homo sapiens (Human).